The following is a 707-amino-acid chain: Terpene cyclase/mutase atnI (707 aa).

Positions 1-20 are enriched in polar residues; the sequence is MGQHIASSESSTNGHVSLET. Residues 1–22 form a disordered region; that stretch reads MGQHIASSESSTNGHVSLETNG. PFTB repeat units lie at residues 130–173, 494–535, 571–608, and 620–661; these read AVEI…RLLG, LRDA…VGKT, TAQG…ETLA, and SRRG…VQTA.

It belongs to the terpene cyclase/mutase family.

It functions in the pathway secondary metabolite biosynthesis; terpenoid biosynthesis. Terpene cyclase/mutase; part of the gene cluster that mediates the biosynthesis of the meroterpenoids arthripenoids. The pathway begins with the HR-PKS atnH that catalyzes two chain-extension steps to form a reduced triketide, which then primes the SAT domain in the NR-PKS atnG to initiate three more cycles of extension to give a linear hexaketide corresponding to the polyketide part of arthripenoids. The FAD-dependent monooxygenase atnJ then performs an oxidative decarboxylation at C11 of the atnH/atnG product, via an electrophilic aromatic hydroxylation with concomitant ipso-decarboxylation. The membrane-bound polyprenyl transferase atnF then introduces a farnesyl group before the FAD-dependent monooxygenase atnK functions as the first epoxidase on terminal C12'-C13' olefin, followed by a second epoxidation on C7'-C8' catalyzed by atnA. The terpene cyclase/mutase atnI then initiates the sequential tricyclic ring formation through protonation of the terminal epoxide and catalyzes the regioselective and stereoselective 6/6/6-tricyclic ring formation. The cytochrome P450 monooxygenase atnM is responsible for hydroxylating both C1' and C10'. The next steps may involve ketoreduction and acetyl transfer by the ketoreductase atnB and the acetyltransferase atnC, and lead to the production of arthripenoid B, the final biosynthetic product of the atn cluster. The hydroquinone moiety in arthripenoid B is prone to undergo spontaneous oxidation to afford a benzoquinone compound, a key intermediate for generating structure diversity. For instance, addition of a cysteine followed by ring contraction gives arthripenoid A, tautomerization gives the main product arthripenoid C, addition of a molecular of water or amine affords arthripenoid D or E, respectively, and loss of one water forms arthripenoid F. In Arthrinium sp, this protein is Terpene cyclase/mutase atnI.